Here is a 615-residue protein sequence, read N- to C-terminus: 9-cis-epoxycarotenoid dioxygenase NCED1, chloroplastic (615 aa).

The N-terminal 41 residues, 1-41 (MPSPASNTWINTTLPSSCSSPFKDLASTSSSPTTLLPFKKR), are a transit peptide targeting the chloroplast. 2 disordered regions span residues 20–45 (SPFK…SSSN) and 62–101 (YQPT…KQPF). Composition is skewed to low complexity over residues 27–37 (STSSSPTTLLP) and 64–86 (PTST…TTTT). Residues histidine 316, histidine 365, and histidine 430 each coordinate Fe cation. Residues 571-592 (KEWKSELQIVNAQNLKLEASIK) are a coiled coil. Histidine 602 lines the Fe cation pocket.

It belongs to the carotenoid oxygenase family. It depends on Fe(2+) as a cofactor.

It localises to the plastid. The protein localises to the chloroplast thylakoid membrane. The catalysed reaction is a 9-cis-epoxycarotenoid + O2 = a 12'-apo-carotenal + 2-cis,4-trans-xanthoxin. It carries out the reaction 9-cis-violaxanthin + O2 = (3S,5R,6S)-5,6-epoxy-3-hydroxy-5,6-dihydro-12'-apo-beta-caroten-12'-al + 2-cis,4-trans-xanthoxin. It catalyses the reaction 9'-cis-neoxanthin + O2 = (3S,5R,6R)-3,5-dihydroxy-6,7-didehydro-5,6-dihydro-12'-apo-beta-caroten-12'-al + 2-cis,4-trans-xanthoxin. Functionally, has a 11,12(11',12') 9-cis epoxycarotenoid cleavage activity. Catalyzes the first step of abscisic-acid biosynthesis from carotenoids, in response to water stress. Active on 9-cis-violaxanthin and 9'-cis-neoxanthin, but not on the all-trans isomers of violaxanthin and neoxanthin. This is 9-cis-epoxycarotenoid dioxygenase NCED1, chloroplastic (NCED1) from Phaseolus vulgaris (Kidney bean).